A 128-amino-acid chain; its full sequence is Organic solute transporter subunit beta (128 aa).

At 1-30 the chain is on the extracellular side; that stretch reads MDHSAEKAAANAEVPQELLEEMLWYFRAED. A helical membrane pass occupies residues 31–53; sequence AAPWNYSILVLAVLVVMTSMFLL. At 54-128 the chain is on the cytoplasmic side; the sequence is RRSILANRNR…FLPDPQETES (75 aa). 2 disordered regions span residues 61 to 80 and 101 to 128; these read RNRK…HLDD and PDLA…ETES. Composition is skewed to basic and acidic residues over residues 66–80 and 101–115; these read QPQD…HLDD and PDLA…EKDS. At S116 the chain carries Phosphoserine.

This sequence belongs to the OST-beta family. In terms of assembly, interacts with SLC51A. The Ost-alpha/Ost-beta complex is a heterodimer composed of alpha (SLC51A) and beta (SLC51B) subunit; induces the transport of SLC51A from the endoplasmic reticulum to the plasma membrane. As to expression, present at high level in ileum. In ileum, it is restricted to the apical domain on the mature villus enterocytes with little detectable expression in the goblet cells or crypt enterocytes (at protein level). Expressed in kidney but not in heart, brain, liver, spleen, embryo, lung, thymus, ovary nor testis.

It is found in the cell membrane. It carries out the reaction taurocholate(out) = taurocholate(in). The enzyme catalyses tauroursodeoxycholate(out) = tauroursodeoxycholate(in). The catalysed reaction is glycoursodeoxycholate(out) = glycoursodeoxycholate(in). It catalyses the reaction glycocholate(out) = glycocholate(in). It carries out the reaction taurochenodeoxycholate(out) = taurochenodeoxycholate(in). The enzyme catalyses glycochenodeoxycholate(out) = glycochenodeoxycholate(in). The catalysed reaction is taurodeoxycholate(out) = taurodeoxycholate(in). It catalyses the reaction glycodeoxycholate(out) = glycodeoxycholate(in). It carries out the reaction prostaglandin E2(out) = prostaglandin E2(in). The enzyme catalyses estrone 3-sulfate(out) = estrone 3-sulfate(in). The catalysed reaction is dehydroepiandrosterone 3-sulfate(out) = dehydroepiandrosterone 3-sulfate(in). In terms of biological role, essential component of the Ost-alpha/Ost-beta complex, a heterodimer that acts as the intestinal basolateral transporter responsible for bile acid export from enterocytes into portal blood. The Ost-alpha/Ost-beta complex efficiently transports the major species of bile acids (taurocholate). Taurine conjugates are transported more efficiently across the basolateral membrane than glycine-conjugated bile acids. Can also transport steroids such as estrone 3-sulfate and dehydroepiandrosterone 3-sulfate, therefore playing a role in the enterohepatic circulation of sterols. Able to transport eicosanoids such as prostaglandin E2. Modulates SLC51A glycosylation, membrane trafficking and stability activities. This Mus musculus (Mouse) protein is Organic solute transporter subunit beta (Slc51b).